The chain runs to 237 residues: Large ribosomal subunit protein uL3 (237 aa).

Disordered stretches follow at residues 133–155 and 213–237; these read ASHGNSITHRSHGSTGQRQDPGK and PENAPKPAGLRAGAKAEAAATEGAE. Polar residues predominate over residues 135 to 150; that stretch reads HGNSITHRSHGSTGQR. Gln-151 carries the N5-methylglutamine modification. The segment covering 220-237 has biased composition (low complexity); sequence AGLRAGAKAEAAATEGAE.

The protein belongs to the universal ribosomal protein uL3 family. In terms of assembly, part of the 50S ribosomal subunit. Forms a cluster with proteins L14 and L19. Methylated by PrmB.

Its function is as follows. One of the primary rRNA binding proteins, it binds directly near the 3'-end of the 23S rRNA, where it nucleates assembly of the 50S subunit. In Brucella canis (strain ATCC 23365 / NCTC 10854 / RM-666), this protein is Large ribosomal subunit protein uL3.